The sequence spans 59 residues: Large ribosomal subunit protein bL35 (59 aa).

Disordered regions lie at residues 1-22 (MKVK…IKRK) and 30-49 (APHK…TVSA). Positions 30 to 43 (APHKTTKQKRHLRK) are enriched in basic residues.

Belongs to the bacterial ribosomal protein bL35 family.

The chain is Large ribosomal subunit protein bL35 (rpmI) from Mycoplasma pneumoniae (strain ATCC 29342 / M129 / Subtype 1) (Mycoplasmoides pneumoniae).